The primary structure comprises 297 residues: MSHQMAPWIPMFIQSCKNNTEPFVSFQFATVDELTNKPRCRTVVFRDFLFHDKRTNVLTFNTDMRSSKITESFITPNSNNSSDSKRCETPFFEACFYFPETWEQYRFSGQCFTISKQFKKIPAEIVTKYDIFSPRFSETNDDSTDEEIDTPINDDDDDDKNNDADNNDINEDNKLIESIENDEHHEDEDDYYPQPQEWEAELLRQWSSLSRHTKSLYRKPAPGQKLTSETSKQLDKLHRGVDGAKEDAGLENFGIVCLCVDSVDFLNLKEGRGGERWIFQKTDGKDEDLWEEQEVCP.

The disordered stretch occupies residues 136-174; the sequence is FSETNDDSTDEEIDTPINDDDDDDKNNDADNNDINEDNK. The span at 139–170 shows a compositional bias: acidic residues; sequence TNDDSTDEEIDTPINDDDDDDKNNDADNNDIN.

To S.pombe SpBC725.03.

This is an uncharacterized protein from Saccharomyces cerevisiae (strain ATCC 204508 / S288c) (Baker's yeast).